The following is a 619-amino-acid chain: Guanylate cyclase soluble subunit beta-1 (619 aa).

H105 contributes to the heme binding site. Residues 421–554 enclose the Guanylate cyclase domain; the sequence is TILFSGIVGF…NTVNLTSRTE (134 aa).

This sequence belongs to the adenylyl cyclase class-4/guanylyl cyclase family. As to quaternary structure, the active enzyme is formed by a heterodimer of an alpha and a beta subunit. Heterodimer with GUCY1A1. Can also form inactive homodimers in vitro. Heme serves as cofactor. In terms of tissue distribution, detected in brain cortex and cerebellum (at protein level).

Its subcellular location is the cytoplasm. The catalysed reaction is GTP = 3',5'-cyclic GMP + diphosphate. Its activity is regulated as follows. Activated by nitric oxide in the presence of magnesium or manganese ions. Functionally, mediates responses to nitric oxide (NO) by catalyzing the biosynthesis of the signaling molecule cGMP. This chain is Guanylate cyclase soluble subunit beta-1, found in Homo sapiens (Human).